The primary structure comprises 586 residues: MASSSLVTSLLFSSSSSSNTATSTSSRRSFSLFSKNQYCKPRPLRRSSSRLLVRCSLQQQQEEKAAPAAESHHAGGGQDDAATASHHAVEGENGVADADGGGVKKSKEELEEEEQQEVDWRSDEEFKRFMGNPSIEAAIKLEKKRADRKLRELDREPDANPLAGLLRGLARGQLAREKERLELAENTFKALDLNKLKSCFGYDTFFAVDVRRFGDGGIFIGNLRKPVEEVRPKLEKKIAEAAGTDVTLWFMEEKNDDITKQVCMVQPKAEIDLQLEITKLSTPWGYLSAVALAVTTFGTIAIMSGFFLKPGATFDDYVSDVLPLFAGFLSILGVSEIATRLTAARYGVKLSPSFLVPSNWTGCLGVMNNYESLLPNKKALFDIPVARAASAYLTSVALAVSAFVSDGSLNGGKNALFVRPEFFYNNPLLSFVQAVIGPYADELGNVLPNAVEGVGVPVDPLAFAGLLGIVVTSLNLLPCGRLEGGRIAQALFGRGAAAVLSFATSVALGAGAIIGGSVLCLAWGLFATFVRGGEEIPAQDEITPLGSERYAWGLVLAVVCLLTLFPNGGGTYSSDFLGAPFFRGGI.

The transit peptide at 1–54 (MASSSLVTSLLFSSSSSSNTATSTSSRRSFSLFSKNQYCKPRPLRRSSSRLLVR) directs the protein to the chloroplast. 2 disordered regions span residues 13–32 (SSSS…SFSL) and 58–122 (QQQQ…DWRS). A compositionally biased stretch (basic and acidic residues) spans 61-73 (QEEKAAPAAESHH). Residues 103-195 (VKKSKEELEE…NTFKALDLNK (93 aa)) adopt a coiled-coil conformation. The next 7 helical transmembrane spans lie at 287–307 (LSAV…SGFF), 318–338 (VSDV…SEIA), 389–409 (ASAY…DGSL), 427–447 (PLLS…GNVL), 454–474 (VGVP…VTSL), 506–526 (VALG…WGLF), and 550–570 (YAWG…NGGG).

The protein belongs to the peptidase M50B family.

The protein resides in the plastid. Its subcellular location is the chloroplast membrane. Probable membrane-associated metalloprotease that may be involved in chloroplast development. The protein is Probable zinc metalloprotease EGY3, chloroplastic (EGY3) of Oryza sativa subsp. japonica (Rice).